The chain runs to 312 residues: Aquaglyceroporin-2 (312 aa).

A run of 6 helical transmembrane segments spans residues 78-98 (FLGNFVLIYIAKGAVITSLLV), 104-124 (LGLTIGIGVAVTMALYVSLGI), 151-171 (YIAAQMLGTFLGAACAYGVFA), 203-223 (GIFYPIFAELISTAVLLLCVC), 239-259 (VAIGALVFVMVNNFGLASPLA), and 286-306 (YYFWVPLVVPFFGAILGLFLY).

It belongs to the MIP/aquaporin (TC 1.A.8) family.

The protein resides in the membrane. It catalyses the reaction glycerol(in) = glycerol(out). The catalysed reaction is H2O(in) = H2O(out). The enzyme catalyses urea(in) = urea(out). Mediates water and glycerol transport across cell membranes. Permeable to urea. Permeable to methylamine/methylammonium. Permeable to dihydroxyacetone. In Trypanosoma brucei brucei, this protein is Aquaglyceroporin-2.